The primary structure comprises 439 residues: Methylenetetrahydrofolate--tRNA-(uracil-5-)-methyltransferase TrmFO (439 aa).

Position 8-13 (8-13 (GAGLAG)) interacts with FAD.

This sequence belongs to the MnmG family. TrmFO subfamily. FAD is required as a cofactor.

It localises to the cytoplasm. It carries out the reaction uridine(54) in tRNA + (6R)-5,10-methylene-5,6,7,8-tetrahydrofolate + NADH + H(+) = 5-methyluridine(54) in tRNA + (6S)-5,6,7,8-tetrahydrofolate + NAD(+). The enzyme catalyses uridine(54) in tRNA + (6R)-5,10-methylene-5,6,7,8-tetrahydrofolate + NADPH + H(+) = 5-methyluridine(54) in tRNA + (6S)-5,6,7,8-tetrahydrofolate + NADP(+). Its function is as follows. Catalyzes the folate-dependent formation of 5-methyl-uridine at position 54 (M-5-U54) in all tRNAs. In Lacticaseibacillus paracasei (strain ATCC 334 / BCRC 17002 / CCUG 31169 / CIP 107868 / KCTC 3260 / NRRL B-441) (Lactobacillus paracasei), this protein is Methylenetetrahydrofolate--tRNA-(uracil-5-)-methyltransferase TrmFO.